The chain runs to 153 residues: Fimbrial protein EcpC (153 aa).

Residues 1–8 (MLKQVQKG) constitute a propeptide, leader sequence. At Phe9 the chain carries N-methylphenylalanine. A helical membrane pass occupies residues 9–29 (FTLIELMIVIAIIGILAAIAL). A disulfide bond links Cys130 and Cys143.

The protein belongs to the N-Me-Phe pilin family.

The protein resides in the fimbrium. It localises to the membrane. The protein is Fimbrial protein EcpC (ecpC) of Eikenella corrodens.